We begin with the raw amino-acid sequence, 96 residues long: Aspartyl/glutamyl-tRNA(Asn/Gln) amidotransferase subunit C (96 aa).

The protein belongs to the GatC family. In terms of assembly, heterotrimer of A, B and C subunits.

The enzyme catalyses L-glutamyl-tRNA(Gln) + L-glutamine + ATP + H2O = L-glutaminyl-tRNA(Gln) + L-glutamate + ADP + phosphate + H(+). It carries out the reaction L-aspartyl-tRNA(Asn) + L-glutamine + ATP + H2O = L-asparaginyl-tRNA(Asn) + L-glutamate + ADP + phosphate + 2 H(+). Allows the formation of correctly charged Asn-tRNA(Asn) or Gln-tRNA(Gln) through the transamidation of misacylated Asp-tRNA(Asn) or Glu-tRNA(Gln) in organisms which lack either or both of asparaginyl-tRNA or glutaminyl-tRNA synthetases. The reaction takes place in the presence of glutamine and ATP through an activated phospho-Asp-tRNA(Asn) or phospho-Glu-tRNA(Gln). This is Aspartyl/glutamyl-tRNA(Asn/Gln) amidotransferase subunit C from Exiguobacterium sibiricum (strain DSM 17290 / CCUG 55495 / CIP 109462 / JCM 13490 / 255-15).